The sequence spans 653 residues: DUF21 domain-containing protein At1g55930, chloroplastic (653 aa).

A chloroplast-targeting transit peptide spans 1–72; that stretch reads MELDLSVLGR…DFSHRCQFVV (72 aa). 5 consecutive transmembrane segments (helical) span residues 103–123, 157–177, 208–228, 234–254, and 280–300; these read GIVL…KVLA, GLIL…ETSI, FLTT…ALVT, IFGE…ILLL, and WLSL…MGIL. Residues 149–335 form the CNNM transmembrane domain; that stretch reads VLKVLREQGL…ELSGAIEEEE (187 aa). CBS domains are found at residues 354–415 and 421–479; these read MTPL…LLES and MAHK…IFDE.

The protein resides in the plastid. The protein localises to the chloroplast membrane. This Arabidopsis thaliana (Mouse-ear cress) protein is DUF21 domain-containing protein At1g55930, chloroplastic (CBSDUFCH2).